A 702-amino-acid polypeptide reads, in one-letter code: ATP-dependent RNA helicase DDX4 (702 aa).

The interval 22-228 is disordered; the sequence is FEKDKYSSGA…YIPPPPPEDE (207 aa). The span at 29 to 46 shows a compositional bias: polar residues; sequence SGANGDTFNRTSASSDIG. Gly residues-rich tracts occupy residues 58-68 and 125-137; these read GGFGRGKGFGN and RGSF…GFGL. Composition is skewed to polar residues over residues 141 to 150 and 195 to 215; these read NSESDQDQGT and SGKN…SQGP. Residues serine 195 and serine 199 each carry the phosphoserine modification. The interval 201–220 is interaction with RANBP9; it reads KSETEGGESSDSQGPKVTYI. The short motif at 261–289 is the Q motif element; the sequence is LTFEEANLCQTLNNNIAKAGYTKLTPVQK. Residues 292–475 form the Helicase ATP-binding domain; that stretch reads IPIVLAGRDL…GDFLKSSYLF (184 aa). 305–312 serves as a coordination point for ATP; that stretch reads AQTGSGKT. Residues 419 to 422 carry the DEAD box motif; that stretch reads DEAD. The Helicase C-terminal domain maps to 503 to 648; that stretch reads KLVEILRNIG…DVPAWLEEIA (146 aa). The span at 681–693 shows a compositional bias: polar residues; sequence TLNTAGISSSQAP. The tract at residues 681–702 is disordered; the sequence is TLNTAGISSSQAPNPVDDESWD. A Phosphoserine modification is found at serine 700.

This sequence belongs to the DEAD box helicase family. DDX4/VASA subfamily. In terms of assembly, found in a mRNP complex, at least composed of TDRD1, TDRD6, TDRD7 and DDX4. Interacts with RANBP9. Interacts with RANBP10. Interacts with PIWIL2 and MAEL. Interacts with BMAL1 and CLOCK. Interacts with Tex19.1 and, probably, Tex19.2. Interacts with RBM46. In terms of tissue distribution, testis-specific.

It localises to the cytoplasm. The protein localises to the perinuclear region. It carries out the reaction ATP + H2O = ADP + phosphate + H(+). In terms of biological role, ATP-dependent RNA helicase required during spermatogenesis to repress transposable elements and preventing their mobilization, which is essential for the germline integrity. Acts via the piRNA metabolic process, which mediates the repression of transposable elements during meiosis by forming complexes composed of piRNAs and Piwi proteins and governs the methylation and subsequent repression of transposons. Involved in the secondary piRNAs metabolic process, the production of piRNAs in fetal male germ cells through a ping-pong amplification cycle. Required for PIWIL2 slicing-triggered piRNA biogenesis: helicase activity enables utilization of one of the slice cleavage fragments generated by PIWIL2 and processing these pre-piRNAs into piRNAs. This chain is ATP-dependent RNA helicase DDX4, found in Mus musculus (Mouse).